The chain runs to 620 residues: Membrane protein insertase YidC (620 aa).

6 helical membrane-spanning segments follow: residues 5-25, 343-363, 366-386, 436-456, 482-502, and 529-549; these read QIIG…FMST, LGWP…FDGL, VFSS…LVLL, LSGC…FNFF, LPFT…LMTI, and PVVF…YYFV.

Belongs to the OXA1/ALB3/YidC family. Type 1 subfamily. As to quaternary structure, interacts with the Sec translocase complex via SecD. Specifically interacts with transmembrane segments of nascent integral membrane proteins during membrane integration.

It localises to the cell inner membrane. Its function is as follows. Required for the insertion and/or proper folding and/or complex formation of integral membrane proteins into the membrane. Involved in integration of membrane proteins that insert both dependently and independently of the Sec translocase complex, as well as at least some lipoproteins. Aids folding of multispanning membrane proteins. This Cytophaga hutchinsonii (strain ATCC 33406 / DSM 1761 / CIP 103989 / NBRC 15051 / NCIMB 9469 / D465) protein is Membrane protein insertase YidC.